A 351-amino-acid polypeptide reads, in one-letter code: MYGWEMLSFNIHDGFLEAIVRGNRSGLLTAADYNNLCQCENLDDVKMHLTATEYGPYLQNEPSPLHTTTIVEKCTLKLVDEYKHMMCQATEPLSTFLQYITYGHMIDNVVLIVTGTLHERDVNELLEKCHPLGMFDSIASLAVAQNMRELYRLVLVDTPLAPYFSECITSEDLDDMNIEIMRNTLYKAYLEDFYKFCEKLGGATAEIMCDLLSFEADRRAVNITINSIGTELTRDDRRKLYSNFGLLYPYGHEELAVCEDVDQVRGVMEKYPPYQAIFAKISYGESQMLDKAFYEEEVRRLCLSFEQQFHYAVFFAYIRLREQEIRNLMWISECVAQNQKNRVHDSVVFIF.

It belongs to the V-ATPase V0D/AC39 subunit family. As to quaternary structure, V-ATPase is a heteromultimeric enzyme composed of a peripheral catalytic V1 complex (components A to H) attached to an integral membrane V0 proton pore complex (components: a, c, c', c'' and d).

Its function is as follows. Subunit of the integral membrane V0 complex of vacuolar ATPase. Vacuolar ATPase is responsible for acidifying a variety of intracellular compartments in eukaryotic cells, thus providing most of the energy required for transport processes in the vacuolar system. In Oryza sativa subsp. japonica (Rice), this protein is Probable V-type proton ATPase subunit d.